Reading from the N-terminus, the 533-residue chain is Flavin-containing monooxygenase 5 (533 aa).

Arg5 is modified (dimethylated arginine). Residues 10 to 14 (GGGVS), Glu33, and 41 to 42 (LW) each bind FAD. Ser54 is modified (phosphoserine). At Tyr56 the chain carries Phosphotyrosine. The residue at position 58 (Ser58) is a Phosphoserine. Residue 62-63 (NT) coordinates FAD. 196–199 (SGGD) is an NADP(+) binding site. A Phosphoserine modification is found at Ser280. Position 284 is a phosphothreonine (Thr284). Ser401 carries the post-translational modification Phosphoserine. Residues 510 to 530 (MVSAVTTGCFMLAVVFFAIIM) form a helical membrane-spanning segment.

The protein belongs to the FMO family. Requires FAD as cofactor. Expressed in liver.

Its subcellular location is the microsome membrane. The protein resides in the endoplasmic reticulum membrane. The enzyme catalyses N,N-dimethylaniline + NADPH + O2 + H(+) = N,N-dimethylaniline N-oxide + NADP(+) + H2O. The catalysed reaction is NADPH + O2 + H(+) = H2O2 + NADP(+). It catalyses the reaction heptan-2-one + NADPH + O2 + H(+) = pentyl acetate + NADP(+) + H2O. It carries out the reaction octan-3-one + NADPH + O2 + H(+) = pentyl propanoate + NADP(+) + H2O. The enzyme catalyses octan-3-one + NADPH + O2 + H(+) = ethyl hexanoate + NADP(+) + H2O. The catalysed reaction is hexan-3-one + NADPH + O2 + H(+) = ethyl butanoate + NADP(+) + H2O. It catalyses the reaction hexan-3-one + NADPH + O2 + H(+) = propyl propanoate + NADP(+) + H2O. It carries out the reaction heptan-4-one + NADPH + O2 + H(+) = propyl butanoate + NADP(+) + H2O. The enzyme catalyses (2E)-geranial + NADPH + O2 + H(+) = (1E)-2,6-dimethylhepta-1,5-dien-1-yl formate + NADP(+) + H2O. The catalysed reaction is sulcatone + NADPH + O2 + H(+) = 4-methylpent-3-en-1-yl acetate + NADP(+) + H2O. Functionally, acts as a Baeyer-Villiger monooxygenase on a broad range of substrates. Catalyzes the insertion of an oxygen atom into a carbon-carbon bond adjacent to a carbonyl, which converts ketones to esters. Active on diverse carbonyl compounds, whereas soft nucleophiles are mostly non- or poorly reactive. In contrast with other forms of FMO it is non- or poorly active on 'classical' substrates such as drugs, pesticides, and dietary components containing soft nucleophilic heteroatoms. Able to oxidize drug molecules bearing a carbonyl group on an aliphatic chain, such as nabumetone and pentoxifylline. Also, in the absence of substrates, shows slow but yet significant NADPH oxidase activity. Acts as a positive modulator of cholesterol biosynthesis as well as glucose homeostasis, promoting metabolic aging via pleiotropic effects. The sequence is that of Flavin-containing monooxygenase 5 (FMO5) from Cavia porcellus (Guinea pig).